The sequence spans 1460 residues: ABC transporter C family member 5 (1460 aa).

2 disordered regions span residues 1–23 (MKYN…NESE) and 37–68 (GNNN…KKKN). Low complexity predominate over residues 37 to 55 (GNNNNDINNNNNINNNNDS). 5 helical membrane passes run 196-216 (FALS…GPIF), 238-258 (LGYY…IFLY), 320-340 (LIFA…CVGW), 425-445 (LIVV…TVYY), and 456-476 (IFAA…LPYG). Positions 196–482 (FALSWVHFGL…LPYGYNIYIQ (287 aa)) constitute an ABC transmembrane type-1 1 domain. Residues 537–567 (IKPQTNPPPPRTTPSNDKSSPSGNNSNNEKK) are disordered. The segment covering 551–563 (SNDKSSPSGNNSN) has biased composition (polar residues). An ABC transporter 1 domain is found at 560 to 783 (NNSNNEKKEV…INSAYGNSSL (224 aa)). Position 593–600 (593–600 (GPVGSGKS)) interacts with ATP. 4 helical membrane-spanning segments follow: residues 842–862 (MYYV…GYCI), 922–942 (AGEF…LIIV), 1014–1034 (ILVI…PIII), and 1108–1128 (WLGL…CIFI). Positions 853 to 1166 (FLIALLGYCI…ATQQLAELET (314 aa)) constitute an ABC transmembrane type-1 2 domain. The ABC transporter 2 domain maps to 1210–1444 (IIFENVVMSY…ENSLFNWLID (235 aa)). Residue 1244-1251 (GRTGSGKS) coordinates ATP.

Belongs to the ABC transporter superfamily. ABCC family. Conjugate transporter (TC 3.A.1.208) subfamily.

It is found in the membrane. The sequence is that of ABC transporter C family member 5 (abcC5) from Dictyostelium discoideum (Social amoeba).